Reading from the N-terminus, the 78-residue chain is Large ribosomal subunit protein eL20 (78 aa).

This sequence belongs to the eukaryotic ribosomal protein eL20 family. As to quaternary structure, part of the 50S ribosomal subunit. Binds 23S rRNA.

The polypeptide is Large ribosomal subunit protein eL20 (Thermococcus sibiricus (strain DSM 12597 / MM 739)).